A 275-amino-acid polypeptide reads, in one-letter code: T cell receptor alpha chain MC.7.G5 (275 aa).

An N-terminal signal peptide occupies residues 1-21; sequence MACPGFLWALVISTCLEFSMA. The 95-residue stretch at 22–116 folds into the Ig-like V-type domain; that stretch reads QTVTQSQPEM…AAMYFCAYRS (95 aa). The interval 22 to 116 is t cell receptor alpha variable 38-2DV8; that stretch reads QTVTQSQPEM…AAMYFCAYRS (95 aa). Cysteine 43 and cysteine 112 are joined by a disulfide. Residues 47-53 form a CDR1 region; that stretch reads TSESDYY. Residues 71 to 81 form a CDR2 region; that stretch reads QEAYKQQNATE. N-linked (GlcNAc...) asparagine glycosylation occurs at asparagine 78. A CDR3 region spans residues 112–124; sequence CAYRSAVNARLMF. The t cell receptor alpha joining 31 stretch occupies residues 119 to 134; sequence NARLMFGDGTQLVVKP. Residues 136–275 are t cell receptor alpha constant; that stretch reads IQNPDPAVYQ…LLMTLRLWSS (140 aa). One can recognise an Ig-like C1-type domain in the interval 154-242; sequence KSVCLFTDFD…LVEKSFETDT (89 aa). An intrachain disulfide couples cysteine 157 to cysteine 207. N-linked (GlcNAc...) asparagine glycans are attached at residues asparagine 167, asparagine 201, asparagine 212, and asparagine 248. Residues 229–250 are connecting peptide; the sequence is CDVKLVEKSFETDTNLNFQNLS. A helical transmembrane segment spans residues 251–273; that stretch reads VIGFRILLLKVAGFNLLMTLRLW. Topologically, residues 274–275 are cytoplasmic; the sequence is SS.

In terms of assembly, disulfide-linked heterodimer with TRBV25-1*01J2S3*01C2*01 beta chain. The alpha-beta TR associates with the transmembrane signaling CD3 coreceptor proteins to form the TR-CD3 (TCR). The assembly of alpha-beta TR heterodimers with CD3 occurs in the endoplasmic reticulum where a single alpha-beta TR heterodimer associates with one CD3D-CD3E heterodimer, one CD3G-CD3E heterodimer and one CD247 homodimer forming a stable octameric structure. CD3D-CD3E and CD3G-CD3E heterodimers preferentially associate with TR alpha and TR beta chains (via TM domain), respectively. The association of the CD247 homodimer is the last step of TCR assembly in the endoplasmic reticulum and is required for transport to the cell surface. Expressed in MR1-restricted CD8-positive T cells.

The protein resides in the cell membrane. Functionally, the alpha chain of TRAV38-2DV8*01J31*01C*01/TRBV25-1*01J2S3*01C2*01 alpha-beta T cell receptor (TR) clonotype that displays pan-cancer cell recognition via the invariant MR1 molecule. On CD8-positive T cell clone MC.7.G5, likely recognizes tumor-specific or -associated metabolite(s) essential for cancer cell survival, triggering killing of many cancer cell types including lung, melanoma, leukemia, colon, breast, prostate, bone and ovarian cancer cells. Mediates cancer cell cytotoxicity in an HLA-independent manner. Has no reactivity to healthy cells, even stressed or infected by bacteria. Antigen recognition initiates TR-CD3 clustering on the cell surface and intracellular activation of LCK that phosphorylates the ITAM motifs of CD3G, CD3D, CD3E and CD247 enabling the recruitment of ZAP70. In turn, ZAP70 phosphorylates LAT, which recruits numerous signaling molecules to form the LAT signalosome. The LAT signalosome propagates signal branching to three major signaling pathways, the calcium, the mitogen-activated protein kinase (MAPK) kinase and the nuclear factor NF-kappa-B (NF-kB) pathways, leading to the mobilization of transcription factors that are critical for gene expression and essential for T cell differentiation into effector/memory T cells. This is T cell receptor alpha chain MC.7.G5 from Homo sapiens (Human).